A 464-amino-acid polypeptide reads, in one-letter code: tRNA modification GTPase MnmE (464 aa).

Positions 25, 87, and 130 each coordinate (6S)-5-formyl-5,6,7,8-tetrahydrofolate. The region spanning 226–386 is the TrmE-type G domain; the sequence is GLSVVLAGQP…LRAELLRIAG (161 aa). K(+) is bound at residue N236. Residues 236-241, 255-261, and 280-283 each bind GTP; these read NVGKSS, TPIAGTT, and DTAG. Residue S240 coordinates Mg(2+). The K(+) site is built by T255, I257, and T260. T261 serves as a coordination point for Mg(2+). Position 464 (K464) interacts with (6S)-5-formyl-5,6,7,8-tetrahydrofolate.

Belongs to the TRAFAC class TrmE-Era-EngA-EngB-Septin-like GTPase superfamily. TrmE GTPase family. As to quaternary structure, homodimer. Heterotetramer of two MnmE and two MnmG subunits. It depends on K(+) as a cofactor.

It localises to the cytoplasm. In terms of biological role, exhibits a very high intrinsic GTPase hydrolysis rate. Involved in the addition of a carboxymethylaminomethyl (cmnm) group at the wobble position (U34) of certain tRNAs, forming tRNA-cmnm(5)s(2)U34. This Burkholderia ambifaria (strain ATCC BAA-244 / DSM 16087 / CCUG 44356 / LMG 19182 / AMMD) (Burkholderia cepacia (strain AMMD)) protein is tRNA modification GTPase MnmE.